The chain runs to 162 residues: Putative pre-16S rRNA nuclease (162 aa).

The protein belongs to the YqgF nuclease family.

It is found in the cytoplasm. Could be a nuclease involved in processing of the 5'-end of pre-16S rRNA. This is Putative pre-16S rRNA nuclease from Brucella melitensis biotype 1 (strain ATCC 23456 / CCUG 17765 / NCTC 10094 / 16M).